We begin with the raw amino-acid sequence, 353 residues long: Putative glycosyltransferase TagX (353 aa).

The protein belongs to the glycosyltransferase 2 family.

This chain is Putative glycosyltransferase TagX (tagX), found in Staphylococcus aureus (strain COL).